We begin with the raw amino-acid sequence, 195 residues long: Imidazoleglycerol-phosphate dehydratase (195 aa).

The protein belongs to the imidazoleglycerol-phosphate dehydratase family.

The protein localises to the cytoplasm. It carries out the reaction D-erythro-1-(imidazol-4-yl)glycerol 3-phosphate = 3-(imidazol-4-yl)-2-oxopropyl phosphate + H2O. Its pathway is amino-acid biosynthesis; L-histidine biosynthesis; L-histidine from 5-phospho-alpha-D-ribose 1-diphosphate: step 6/9. This is Imidazoleglycerol-phosphate dehydratase from Deinococcus deserti (strain DSM 17065 / CIP 109153 / LMG 22923 / VCD115).